The sequence spans 309 residues: Probable RuBisCO transcriptional regulator (309 aa).

Residues 5–62 (FTLQQLRILKAIATEKSFTRAAEVLFVSQPSLSKQIKTLESRLNISLLNRENNIVSLT) enclose the HTH lysR-type domain. A DNA-binding region (H-T-H motif) is located at residues 22–41 (FTRAAEVLFVSQPSLSKQIK).

Belongs to the LysR transcriptional regulatory family.

The protein localises to the plastid. The protein resides in the chloroplast. In terms of biological role, trans-acting transcriptional regulator of RuBisCO genes (rbcL and rbcS) expression. The polypeptide is Probable RuBisCO transcriptional regulator (rbcR) (Trieres chinensis (Marine centric diatom)).